Here is a 294-residue protein sequence, read N- to C-terminus: Acetyl-coenzyme A carboxylase carboxyl transferase subunit beta (294 aa).

The CoA carboxyltransferase N-terminal domain maps to 30–294; sequence IMTKCPECKK…PEVGGEADGE (265 aa). Residues cysteine 34, cysteine 37, cysteine 53, and cysteine 56 each coordinate Zn(2+). A C4-type zinc finger spans residues 34–56; the sequence is CPECKKIMYTKELQKNLMVCNYC.

Belongs to the AccD/PCCB family. As to quaternary structure, acetyl-CoA carboxylase is a heterohexamer composed of biotin carboxyl carrier protein (AccB), biotin carboxylase (AccC) and two subunits each of ACCase subunit alpha (AccA) and ACCase subunit beta (AccD). The cofactor is Zn(2+).

Its subcellular location is the cytoplasm. The catalysed reaction is N(6)-carboxybiotinyl-L-lysyl-[protein] + acetyl-CoA = N(6)-biotinyl-L-lysyl-[protein] + malonyl-CoA. It participates in lipid metabolism; malonyl-CoA biosynthesis; malonyl-CoA from acetyl-CoA: step 1/1. Component of the acetyl coenzyme A carboxylase (ACC) complex. Biotin carboxylase (BC) catalyzes the carboxylation of biotin on its carrier protein (BCCP) and then the CO(2) group is transferred by the transcarboxylase to acetyl-CoA to form malonyl-CoA. The chain is Acetyl-coenzyme A carboxylase carboxyl transferase subunit beta from Listeria monocytogenes serotype 4a (strain HCC23).